The sequence spans 214 residues: 3-isopropylmalate dehydratase small subunit (214 aa).

Belongs to the LeuD family. LeuD type 1 subfamily. In terms of assembly, heterodimer of LeuC and LeuD.

The catalysed reaction is (2R,3S)-3-isopropylmalate = (2S)-2-isopropylmalate. Its pathway is amino-acid biosynthesis; L-leucine biosynthesis; L-leucine from 3-methyl-2-oxobutanoate: step 2/4. Catalyzes the isomerization between 2-isopropylmalate and 3-isopropylmalate, via the formation of 2-isopropylmaleate. The sequence is that of 3-isopropylmalate dehydratase small subunit from Pseudomonas entomophila (strain L48).